The primary structure comprises 346 residues: MRKFAAIFVVFFVQCTHLYSLAQARAEPDPGVVEYLKQSCVYGNSSYINVYLYNSRFQGKNLGNQQSCQDINASLPVVFITHGFTSSAQVSTFKDLANAFVQKGHTAFIVDWSEAACTDGLPGVQFAEYNAAASNTYDIGQLMAKYTVDLMNKCKIPLNNIQYVGHSLGSHVCGFAAKHVKKLINKTMPYILALDPADPSFGSNKCGERICKSDAKRIVVFKTSILGIGENIIGHLLIVFDGGKSQPACSWYDVPCSHSESIVYATGMVSGRCQHLAVPWTAQQRINPIQWKFWRVFTSNIPAYPTSDTTNCVVLNTNVFKNDNTFEGEYHAFPDCARNLFKCRQQ.

An N-terminal signal peptide occupies residues 1 to 26 (MRKFAAIFVVFFVQCTHLYSLAQARA). Positions 27-37 (EPDPGVVEYLK) are excised as a propeptide. 2 N-linked (GlcNAc...) asparagine glycosylation sites follow: N44 and N72. The active-site Nucleophile is S167. N185 is a glycosylation site (N-linked (GlcNAc...) asparagine). Active-site charge relay system residues include D195 and H258.

Belongs to the AB hydrolase superfamily. Lipase family. Post-translationally, contains six disulfide bonds. In terms of processing, N-glycosylated; contains mannose. Expressed by the venom gland.

The protein localises to the secreted. The enzyme catalyses a 1,2-diacyl-sn-glycero-3-phosphocholine + H2O = a 2-acyl-sn-glycero-3-phosphocholine + a fatty acid + H(+). Catalyzes the hydrolysis of phosphatidylcholine with phospholipase A1 activity. Induces hemolytic activity. Acts as an allergen. The chain is Phospholipase A1 from Solenopsis invicta (Red imported fire ant).